We begin with the raw amino-acid sequence, 184 residues long: UPF0397 protein SAOUHSC_03020 (184 aa).

Transmembrane regions (helical) follow at residues 11–31, 44–64, 77–97, 116–136, and 148–168; these read VVAI…VVIP, AFLA…TGLV, AWWS…WIGL, IGQI…LDIL, and QGVI…TILL.

Belongs to the UPF0397 family.

Its subcellular location is the cell membrane. In Staphylococcus aureus (strain NCTC 8325 / PS 47), this protein is UPF0397 protein SAOUHSC_03020.